Here is a 277-residue protein sequence, read N- to C-terminus: Carbonyl reductase [NADPH] 3 (277 aa).

Residue Ser2 is modified to N-acetylserine. Residues 10–34 (VTGA…GDVV), 38–42 (RDEAR), 63–64 (DI), and Asn90 each bind NADP(+). Ser30 carries the post-translational modification Phosphoserine. Ser140 is a binding site for substrate. Tyr194 acts as the Proton acceptor in catalysis. 194 to 198 (YGVSK) provides a ligand contact to NADP(+).

The protein belongs to the short-chain dehydrogenases/reductases (SDR) family.

The protein localises to the cytoplasm. It catalyses the reaction a secondary alcohol + NADP(+) = a ketone + NADPH + H(+). The enzyme catalyses a quinone + NADPH + H(+) = a quinol + NADP(+). In terms of biological role, catalyzes the NADPH-dependent reduction of carbonyl compounds to their corresponding alcohols. Has low NADPH-dependent oxidoreductase activity. Acts on several orthoquinones, as well as on non-quinone compounds, such as isatin or on the anticancer drug oracin. Best substrates for CBR3 is 1,2- naphthoquinone, hence could play a role in protection against cytotoxicity of exogenous quinones. Exerts activity toward ortho-quinones but not paraquinones. No endogenous substrate for CBR3 except isatin has been identified. The protein is Carbonyl reductase [NADPH] 3 (Cbr3) of Mus musculus (Mouse).